The sequence spans 430 residues: Aspartate--tRNA(Asp/Asn) ligase (430 aa).

Glu166 is a binding site for L-aspartate. Positions 188–191 are aspartate; the sequence is QLYK. Position 210 (Arg210) interacts with L-aspartate. ATP-binding positions include 210-212, 218-220, and Glu353; these read RAE and KHL. Positions 353 and 356 each coordinate Mg(2+). L-aspartate is bound by residues Ser356 and Arg360. 401–404 is an ATP binding site; it reads GAER.

The protein belongs to the class-II aminoacyl-tRNA synthetase family. Type 2 subfamily. Homodimer. Mg(2+) is required as a cofactor.

The protein localises to the cytoplasm. It catalyses the reaction tRNA(Asx) + L-aspartate + ATP = L-aspartyl-tRNA(Asx) + AMP + diphosphate. Its function is as follows. Aspartyl-tRNA synthetase with relaxed tRNA specificity since it is able to aspartylate not only its cognate tRNA(Asp) but also tRNA(Asn). Reaction proceeds in two steps: L-aspartate is first activated by ATP to form Asp-AMP and then transferred to the acceptor end of tRNA(Asp/Asn). This chain is Aspartate--tRNA(Asp/Asn) ligase, found in Methanospirillum hungatei JF-1 (strain ATCC 27890 / DSM 864 / NBRC 100397 / JF-1).